A 402-amino-acid chain; its full sequence is Protein arginine methyltransferase NDUFAF7 homolog, mitochondrial (402 aa).

The protein belongs to the NDUFAF7 family.

Its subcellular location is the mitochondrion. The enzyme catalyses L-arginyl-[protein] + 2 S-adenosyl-L-methionine = N(omega),N(omega)'-dimethyl-L-arginyl-[protein] + 2 S-adenosyl-L-homocysteine + 2 H(+). Functionally, arginine methyltransferase involved in the assembly or stability of mitochondrial NADH:ubiquinone oxidoreductase complex (complex I). This Saccharomyces cerevisiae (strain ATCC 204508 / S288c) (Baker's yeast) protein is Protein arginine methyltransferase NDUFAF7 homolog, mitochondrial.